A 794-amino-acid chain; its full sequence is Glutamine--tRNA ligase (794 aa).

The disordered stretch occupies residues 192–217; it reads DNEKPKKKKEKPAKVEDKAAPVATSE. The 'HIGH' region signature appears at 277–287; sequence PEPNGYLHIGH. ATP contacts are provided by residues 278–280 and 284–290; these read EPN and HIGHAKA. L-glutamine contacts are provided by aspartate 310 and tyrosine 450. Residues threonine 469, 498 to 499, and 506 to 508 contribute to the ATP site; these read RL and MSK. Residues 505-509 carry the 'KMSKS' region motif; that stretch reads VMSKR.

The protein belongs to the class-I aminoacyl-tRNA synthetase family.

It catalyses the reaction tRNA(Gln) + L-glutamine + ATP = L-glutaminyl-tRNA(Gln) + AMP + diphosphate. The sequence is that of Glutamine--tRNA ligase from Lupinus luteus (European yellow lupine).